We begin with the raw amino-acid sequence, 272 residues long: Bifunctional protein FolD (272 aa).

Residues 155–157, Ser-182, and Ile-223 each bind NADP(+); that span reads GRS.

This sequence belongs to the tetrahydrofolate dehydrogenase/cyclohydrolase family. As to quaternary structure, homodimer.

It catalyses the reaction (6R)-5,10-methylene-5,6,7,8-tetrahydrofolate + NADP(+) = (6R)-5,10-methenyltetrahydrofolate + NADPH. The catalysed reaction is (6R)-5,10-methenyltetrahydrofolate + H2O = (6R)-10-formyltetrahydrofolate + H(+). It participates in one-carbon metabolism; tetrahydrofolate interconversion. Its function is as follows. Catalyzes the oxidation of 5,10-methylenetetrahydrofolate to 5,10-methenyltetrahydrofolate and then the hydrolysis of 5,10-methenyltetrahydrofolate to 10-formyltetrahydrofolate. The polypeptide is Bifunctional protein FolD (Fervidobacterium nodosum (strain ATCC 35602 / DSM 5306 / Rt17-B1)).